A 209-amino-acid chain; its full sequence is Small ribosomal subunit protein uS4 (209 aa).

One can recognise an S4 RNA-binding domain in the interval 98–161; sequence TRLDNVVYRM…AKQLRVQEAL (64 aa).

The protein belongs to the universal ribosomal protein uS4 family. Part of the 30S ribosomal subunit. Contacts protein S5. The interaction surface between S4 and S5 is involved in control of translational fidelity.

Functionally, one of the primary rRNA binding proteins, it binds directly to 16S rRNA where it nucleates assembly of the body of the 30S subunit. Its function is as follows. With S5 and S12 plays an important role in translational accuracy. The sequence is that of Small ribosomal subunit protein uS4 from Stenotrophomonas maltophilia (strain R551-3).